The chain runs to 95 residues: MVRIRLTRMGKRHQPFYRIVVVDSRKRRDGAYIESLGYYNPLKEGEIKIDVERAVEWILKGAQPSDTVRDIFRKFGVMKRVHEIKYGKKEEATAE.

It belongs to the bacterial ribosomal protein bS16 family.

The protein is Small ribosomal subunit protein bS16 of Thermotoga maritima (strain ATCC 43589 / DSM 3109 / JCM 10099 / NBRC 100826 / MSB8).